A 190-amino-acid chain; its full sequence is Probable nicotinate-nucleotide adenylyltransferase (190 aa).

Belongs to the NadD family.

It carries out the reaction nicotinate beta-D-ribonucleotide + ATP + H(+) = deamido-NAD(+) + diphosphate. Its pathway is cofactor biosynthesis; NAD(+) biosynthesis; deamido-NAD(+) from nicotinate D-ribonucleotide: step 1/1. Catalyzes the reversible adenylation of nicotinate mononucleotide (NaMN) to nicotinic acid adenine dinucleotide (NaAD). The sequence is that of Probable nicotinate-nucleotide adenylyltransferase from Frankia casuarinae (strain DSM 45818 / CECT 9043 / HFP020203 / CcI3).